A 405-amino-acid chain; its full sequence is MPENVRNIVVEELVRTPVEMQKVELVERKGIGHPDSIADGIAEAVSRALSREYIKRYGIILHHNTDQVEVVGGKAYPRFGGGEVIKPIYILLSGRAVEIVDREMFPVHEVAIKAAREYLKNAVRHLDLDHHVIIDSRIGQGSVDLVGVFNKAKENPIPLANDTSFGVGYAPLSETERIVLETEKLLNSEEFKKEWPAVGEDIKVMGLRKGDEIDITIAAAIVDSEVQNLDDYFAVKEAIYEAAKDVAEAHTERKVNIYVNTADDPEKGIYYITVTGTSAEAGDDGSVGRGNRVNGLITPNRHMSMEAAAGKNPVSHVGKIYNLLSMLIANDIAEQVEGVEEVYVRILSQIGKPIDQPLVASVQVIPKKGYSIDTIQKPAYEIANAWLDDITKIQKMILEDKLNVF.

Residue 139–144 coordinates ATP; it reads GQGSVD.

The protein belongs to the AdoMet synthase 2 family. Mg(2+) serves as cofactor.

The catalysed reaction is L-methionine + ATP + H2O = S-adenosyl-L-methionine + phosphate + diphosphate. Its pathway is amino-acid biosynthesis; S-adenosyl-L-methionine biosynthesis; S-adenosyl-L-methionine from L-methionine: step 1/1. Its function is as follows. Catalyzes the formation of S-adenosylmethionine from methionine and ATP. The polypeptide is S-adenosylmethionine synthase (Thermococcus onnurineus (strain NA1)).